A 179-amino-acid chain; its full sequence is Orotate phosphoribosyltransferase (179 aa).

5-phospho-alpha-D-ribose 1-diphosphate-binding positions include Arg-94, Lys-95, Lys-98, His-100, and 120–128 (EDTSTTGNS). The orotate site is built by Thr-124 and Arg-152.

The protein belongs to the purine/pyrimidine phosphoribosyltransferase family. PyrE subfamily. Homodimer. It depends on Mg(2+) as a cofactor.

It catalyses the reaction orotidine 5'-phosphate + diphosphate = orotate + 5-phospho-alpha-D-ribose 1-diphosphate. It functions in the pathway pyrimidine metabolism; UMP biosynthesis via de novo pathway; UMP from orotate: step 1/2. Catalyzes the transfer of a ribosyl phosphate group from 5-phosphoribose 1-diphosphate to orotate, leading to the formation of orotidine monophosphate (OMP). The chain is Orotate phosphoribosyltransferase from Mycobacterium avium (strain 104).